A 211-amino-acid chain; its full sequence is Ubiquitin-conjugating enzyme E2 S-B (211 aa).

The 147-residue stretch at 11–157 (HIIRRVYKEV…ARLMTDIHAQ (147 aa)) folds into the UBC core domain. The Glycyl thioester intermediate role is filled by Cys-95. Residues 158 to 211 (GTSLRGKDPTDPCSSASTPVVSGDGPMAKKHAGDRDKKLAAKKKTDKKRALRRL) form a disordered region. Basic residues predominate over residues 197 to 211 (AAKKKTDKKRALRRL).

This sequence belongs to the ubiquitin-conjugating enzyme family.

It catalyses the reaction S-ubiquitinyl-[E1 ubiquitin-activating enzyme]-L-cysteine + [E2 ubiquitin-conjugating enzyme]-L-cysteine = [E1 ubiquitin-activating enzyme]-L-cysteine + S-ubiquitinyl-[E2 ubiquitin-conjugating enzyme]-L-cysteine.. The protein operates within protein modification; protein ubiquitination. Functionally, catalyzes the covalent attachment of ubiquitin to other proteins. Acts as an essential factor of the anaphase promoting complex/cyclosome (APC/C), a cell cycle-regulated ubiquitin ligase that controls progression through mitosis. Acts by specifically elongating 'Lys-11'-linked polyubiquitin chains initiated by the E2 enzyme ube2c/ubch10 on APC/C substrates, enhancing the degradation of APC/C substrates by the proteasome and promoting mitotic exit. The polypeptide is Ubiquitin-conjugating enzyme E2 S-B (ube2s-b) (Xenopus laevis (African clawed frog)).